The primary structure comprises 499 residues: Topoisomerase I damage affected protein 11 (499 aa).

The disordered stretch occupies residues 32–62 (RKTGRKIRSASSNGYRLEHHRTSSAGSMHSQ). A coiled-coil region spans residues 179–231 (ALLQSLATKELELLECKQKIEDLKKQTQHEEQNYTRRARELHELKEQVSKHLD). Phosphothreonine is present on Thr-236. Ser-244 and Ser-286 each carry phosphoserine. Disordered regions lie at residues 252–306 (LESR…SKQS), 332–377 (WDDS…SVSR), and 400–499 (DVIT…QKLS). Polar residues predominate over residues 257–287 (ENAGNSSLPSSVSKPKNMGHQSTNQSRSVSP). The span at 290–301 (IQERRQRDDSSD) shows a compositional bias: basic and acidic residues. Polar residues-rich tracts occupy residues 332 to 359 (WDDSLSGTPEVQEGTPTSNSESSAQQYD) and 368 to 377 (KSPSQGSVSR). Basic and acidic residues predominate over residues 403-421 (TDNRCDPVYKSDRQHEQKK). The span at 470–479 (TREKKSKRSS) shows a compositional bias: basic residues.

It belongs to the TDA11 family.

The protein resides in the cytoplasm. The polypeptide is Topoisomerase I damage affected protein 11 (TDA11) (Saccharomyces cerevisiae (strain Zymaflore VL3) (Baker's yeast)).